The primary structure comprises 412 residues: Putative oxidoreductase bli-4, mitochondrial (412 aa).

Residues 1-55 (MSTKLCQRIARTATLSPTSLVPRSSRLIPIVSSAAVRPSSAIPTRRPFSTTESRY) constitute a mitochondrion transit peptide. NADP(+) contacts are provided by I108, N120, N186, Y269, K273, V308, T310, and Q312. The Proton donor role is filled by Y269. K273 acts as the Lowers pKa of active site Tyr in catalysis.

Belongs to the short-chain dehydrogenases/reductases (SDR) family.

It is found in the mitochondrion. Its function is as follows. May play a role as an NAD-dependent dehydrogenase in the mitochondria. The polypeptide is Putative oxidoreductase bli-4, mitochondrial (bli-4) (Neurospora crassa (strain ATCC 24698 / 74-OR23-1A / CBS 708.71 / DSM 1257 / FGSC 987)).